The primary structure comprises 454 residues: Bifunctional protein GlmU (454 aa).

The pyrophosphorylase stretch occupies residues 1–240; the sequence is MNVSVVILAA…EEEFMGVNSK (240 aa). UDP-N-acetyl-alpha-D-glucosamine contacts are provided by residues 8 to 11, Lys-22, and 87 to 88; these read LAAG and GT. Asp-119 contacts Mg(2+). The UDP-N-acetyl-alpha-D-glucosamine site is built by Gly-152, Glu-166, Asn-181, and Asn-238. Residue Asn-238 coordinates Mg(2+). The tract at residues 241–261 is linker; sequence IQLACAQEIMLQRLREKAMEQ. The tract at residues 262–454 is N-acetyltransferase; sequence GVIMNLPHTI…SDKNEEKKEQ (193 aa). UDP-N-acetyl-alpha-D-glucosamine is bound by residues Arg-325 and Lys-342. His-353 acts as the Proton acceptor in catalysis. The UDP-N-acetyl-alpha-D-glucosamine site is built by Tyr-356 and Asn-367. Acetyl-CoA is bound by residues Ala-370, 376–377, Ser-395, Ala-413, and Arg-430; that span reads NY.

The protein in the N-terminal section; belongs to the N-acetylglucosamine-1-phosphate uridyltransferase family. It in the C-terminal section; belongs to the transferase hexapeptide repeat family. In terms of assembly, homotrimer. Mg(2+) is required as a cofactor.

The protein localises to the cytoplasm. It carries out the reaction alpha-D-glucosamine 1-phosphate + acetyl-CoA = N-acetyl-alpha-D-glucosamine 1-phosphate + CoA + H(+). It catalyses the reaction N-acetyl-alpha-D-glucosamine 1-phosphate + UTP + H(+) = UDP-N-acetyl-alpha-D-glucosamine + diphosphate. It participates in nucleotide-sugar biosynthesis; UDP-N-acetyl-alpha-D-glucosamine biosynthesis; N-acetyl-alpha-D-glucosamine 1-phosphate from alpha-D-glucosamine 6-phosphate (route II): step 2/2. It functions in the pathway nucleotide-sugar biosynthesis; UDP-N-acetyl-alpha-D-glucosamine biosynthesis; UDP-N-acetyl-alpha-D-glucosamine from N-acetyl-alpha-D-glucosamine 1-phosphate: step 1/1. The protein operates within bacterial outer membrane biogenesis; LPS lipid A biosynthesis. Catalyzes the last two sequential reactions in the de novo biosynthetic pathway for UDP-N-acetylglucosamine (UDP-GlcNAc). The C-terminal domain catalyzes the transfer of acetyl group from acetyl coenzyme A to glucosamine-1-phosphate (GlcN-1-P) to produce N-acetylglucosamine-1-phosphate (GlcNAc-1-P), which is converted into UDP-GlcNAc by the transfer of uridine 5-monophosphate (from uridine 5-triphosphate), a reaction catalyzed by the N-terminal domain. The protein is Bifunctional protein GlmU of Helicobacter hepaticus (strain ATCC 51449 / 3B1).